Reading from the N-terminus, the 345-residue chain is Ubiquitin-associated domain-containing protein 2 (345 aa).

The first 35 residues, 1-35 (MFTSTGSSGLYKAPLSKSLLLVPSALSLLLALLLP), serve as a signal peptide directing secretion. The Extracellular portion of the chain corresponds to 36-91 (HCQKLFVYDLHAVKNDFQIWRLICGRIICLDLKDTFCSSLLIYNFRIFERRYGSRK). A helical membrane pass occupies residues 92–112 (FASFLLGSWVLSALFDFLLVE). At 113–125 (AMQYFFGITAASN) the chain is on the cytoplasmic side. The helical transmembrane segment at 126–146 (LPSGFLAPVFALFVPFYCSIP) threads the bilayer. Over 147 to 163 (RVQVAQILGPLSITNKT) the chain is Extracellular. Asn161 is a glycosylation site (N-linked (GlcNAc...) asparagine). Residues 164 to 184 (LIYILGLQLFTSGSYIWIVAI) form a helical membrane-spanning segment. The Cytoplasmic segment spans residues 185–345 (SGLMSGLCYN…NVATNFLLQH (161 aa)). Positions 305–345 (EVSEEQVARLMEMGFSRGDALEALRASNNDLNVATNFLLQH) constitute a UBA domain.

As to quaternary structure, interacts with LMBR1L, FAF2, AMFR and VCP.

Its subcellular location is the endoplasmic reticulum membrane. Functionally, restricts trafficking of FAF2 from the endoplasmic reticulum to lipid droplets. In association with LMBR1L and E3 ubiquitin-protein ligase AMFR, negatively regulates the canonical Wnt signaling pathway in the lymphocytes by promoting the ubiquitin-mediated degradation of CTNNB1 and Wnt receptors FZD6 and LRP6. The polypeptide is Ubiquitin-associated domain-containing protein 2 (UBAC2) (Macaca fascicularis (Crab-eating macaque)).